Here is an 883-residue protein sequence, read N- to C-terminus: Pyruvate, phosphate dikinase 2 (883 aa).

The tract at residues 1 to 21 (MAPAPCGRSSQRVFHFGKGKS) is disordered. Histidine 465 (tele-phosphohistidine intermediate) is an active-site residue. The substrate site is built by arginine 571, arginine 628, glutamate 757, glycine 778, threonine 779, asparagine 780, and aspartate 781. Residue glutamate 757 coordinates Mg(2+). Aspartate 781 is a binding site for Mg(2+). The active-site Proton donor is cysteine 843.

Belongs to the PEP-utilizing enzyme family. Requires Mg(2+) as cofactor. Expressed in leaves, roots and stems.

It localises to the cytoplasm. The enzyme catalyses pyruvate + phosphate + ATP = phosphoenolpyruvate + AMP + diphosphate + H(+). In terms of biological role, formation of phosphoenolpyruvate, which is the primary acceptor of CO(2) in C4 and some Crassulacean acid metabolism plants. The polypeptide is Pyruvate, phosphate dikinase 2 (Zea mays (Maize)).